We begin with the raw amino-acid sequence, 743 residues long: 1,4-alpha-glucan branching enzyme GlgB 2 (743 aa).

A disordered region spans residues 1–23 (MSERQGGQEQRTEADGMTTEGIS). Aspartate 422 acts as the Nucleophile in catalysis. The active-site Proton donor is the glutamate 475.

The protein belongs to the glycosyl hydrolase 13 family. GlgB subfamily. As to quaternary structure, monomer.

It catalyses the reaction Transfers a segment of a (1-&gt;4)-alpha-D-glucan chain to a primary hydroxy group in a similar glucan chain.. It participates in glycan biosynthesis; glycogen biosynthesis. Its function is as follows. Catalyzes the formation of the alpha-1,6-glucosidic linkages in glycogen by scission of a 1,4-alpha-linked oligosaccharide from growing alpha-1,4-glucan chains and the subsequent attachment of the oligosaccharide to the alpha-1,6 position. This chain is 1,4-alpha-glucan branching enzyme GlgB 2, found in Xanthomonas euvesicatoria pv. vesicatoria (strain 85-10) (Xanthomonas campestris pv. vesicatoria).